Here is a 113-residue protein sequence, read N- to C-terminus: Ig heavy chain V-III region E109 (113 aa).

Positions 1–113 (EVKLEESGGG…YWGQGTLVTV (113 aa)) constitute an Ig-like domain. C22 and C98 are oxidised to a cystine.

This chain is Ig heavy chain V-III region E109, found in Mus musculus (Mouse).